A 154-amino-acid chain; its full sequence is Large ribosomal subunit protein uL23y (154 aa).

Belongs to the universal ribosomal protein uL23 family.

Binds to a specific region on the 26S rRNA. The protein is Large ribosomal subunit protein uL23y (RPL23AB) of Arabidopsis thaliana (Mouse-ear cress).